Consider the following 147-residue polypeptide: Hemoglobin subunit beta (147 aa).

The residue at position 2 (Val-2) is an N-acetylvaline. The Globin domain occupies 3–147; sequence HLTAEEKSAV…VANALAHKYH (145 aa). Thr-13 is subject to Phosphothreonine. A Phosphoserine modification is found at Ser-45. The residue at position 60 (Lys-60) is an N6-acetyllysine. His-64 lines the heme b pocket. Residue Lys-83 is modified to N6-acetyllysine. His-93 contacts heme b. The residue at position 94 (Cys-94) is an S-nitrosocysteine. At Lys-145 the chain carries N6-acetyllysine.

This sequence belongs to the globin family. As to quaternary structure, heterotetramer of two alpha chains and two beta chains. Red blood cells.

In terms of biological role, involved in oxygen transport from the lung to the various peripheral tissues. This is Hemoglobin subunit beta (HBB) from Sapajus apella (Brown-capped capuchin).